The primary structure comprises 168 residues: Alkyl hydroperoxide reductase C (168 aa).

The region spanning 1-138 is the Thioredoxin domain; it reads EFIEVSEESF…LVNKIKAAQY (138 aa). Catalysis depends on C28, which acts as the Cysteine sulfenic acid (-SOH) intermediate.

The protein belongs to the peroxiredoxin family. AhpC/Prx1 subfamily. Homodimer; disulfide-linked, upon oxidation. 5 homodimers assemble to form a ring-like decamer.

The protein localises to the cytoplasm. The catalysed reaction is a hydroperoxide + NADH + H(+) = an alcohol + NAD(+) + H2O. Functionally, thiol-specific peroxidase that catalyzes the reduction of hydrogen peroxide and organic hydroperoxides to water and alcohols, respectively. Plays a role in cell protection against oxidative stress by detoxifying peroxides. This Ferdinandcohnia aciditolerans (strain JCM 32973 / CCTCC AB 2017280 / YN-1) (Bacillus aciditolerans) protein is Alkyl hydroperoxide reductase C.